Here is a 393-residue protein sequence, read N- to C-terminus: S-adenosylmethionine synthase 2 (393 aa).

Glutamate 9 contributes to the Mg(2+) binding site. Residue histidine 15 participates in ATP binding. K(+) is bound at residue glutamate 43. L-methionine is bound by residues glutamate 56 and glutamine 99. Residues 167–169, 235–238, aspartate 246, 252–253, alanine 269, lysine 273, and lysine 277 each bind ATP; these read DGK, SGRF, and RK. Aspartate 246 provides a ligand contact to L-methionine. L-methionine is bound at residue lysine 277.

It belongs to the AdoMet synthase family. In terms of assembly, homotetramer. It depends on Mn(2+) as a cofactor. Mg(2+) is required as a cofactor. Co(2+) serves as cofactor. The cofactor is K(+).

Its subcellular location is the cytoplasm. It carries out the reaction L-methionine + ATP + H2O = S-adenosyl-L-methionine + phosphate + diphosphate. Its pathway is amino-acid biosynthesis; S-adenosyl-L-methionine biosynthesis; S-adenosyl-L-methionine from L-methionine: step 1/1. Functionally, catalyzes the formation of S-adenosylmethionine from methionine and ATP. The reaction comprises two steps that are both catalyzed by the same enzyme: formation of S-adenosylmethionine (AdoMet) and triphosphate, and subsequent hydrolysis of the triphosphate. May be involved in the synthesis of betain in response to abiotic stress such as high salinity. This Beta vulgaris (Sugar beet) protein is S-adenosylmethionine synthase 2 (SAMS2).